The chain runs to 101 residues: NAD(P)H-quinone oxidoreductase subunit 4L, chloroplastic (101 aa).

The next 3 helical transmembrane spans lie at 2–22, 32–52, and 64–84; these read ILDS…YGLI, MSLE…SNFI, and IFIM…ILAI.

It belongs to the complex I subunit 4L family. In terms of assembly, NDH is composed of at least 16 different subunits, 5 of which are encoded in the nucleus.

The protein resides in the plastid. It is found in the chloroplast thylakoid membrane. It carries out the reaction a plastoquinone + NADH + (n+1) H(+)(in) = a plastoquinol + NAD(+) + n H(+)(out). The enzyme catalyses a plastoquinone + NADPH + (n+1) H(+)(in) = a plastoquinol + NADP(+) + n H(+)(out). NDH shuttles electrons from NAD(P)H:plastoquinone, via FMN and iron-sulfur (Fe-S) centers, to quinones in the photosynthetic chain and possibly in a chloroplast respiratory chain. The immediate electron acceptor for the enzyme in this species is believed to be plastoquinone. Couples the redox reaction to proton translocation, and thus conserves the redox energy in a proton gradient. This chain is NAD(P)H-quinone oxidoreductase subunit 4L, chloroplastic, found in Chlorokybus atmophyticus (Soil alga).